A 345-amino-acid polypeptide reads, in one-letter code: Methionine import ATP-binding protein MetN (345 aa).

Positions 2-241 (IKLNNITKIF…PKTELAQEFI (240 aa)) constitute an ABC transporter domain. 38–45 (GASGAGKS) is a binding site for ATP.

This sequence belongs to the ABC transporter superfamily. Methionine importer (TC 3.A.1.24) family. In terms of assembly, the complex is composed of two ATP-binding proteins (MetN), two transmembrane proteins (MetI) and a solute-binding protein (MetQ).

The protein resides in the cell inner membrane. The enzyme catalyses L-methionine(out) + ATP + H2O = L-methionine(in) + ADP + phosphate + H(+). The catalysed reaction is D-methionine(out) + ATP + H2O = D-methionine(in) + ADP + phosphate + H(+). Part of the ABC transporter complex MetNIQ involved in methionine import. Responsible for energy coupling to the transport system. The polypeptide is Methionine import ATP-binding protein MetN (Haemophilus influenzae (strain 86-028NP)).